Reading from the N-terminus, the 132-residue chain is Phosphomevalonate dehydratase small subunit (132 aa).

Ser-58 (proton acceptor) is an active-site residue.

It belongs to the AcnX type II small subunit family. As to quaternary structure, heterodimer composed of a large subunit (PMDh-L) and a small subunit (PMDh-S).

It carries out the reaction (R)-5-phosphomevalonate = (2E)-3-methyl-5-phosphooxypent-2-enoate + H2O. It functions in the pathway isoprenoid biosynthesis; isopentenyl diphosphate biosynthesis via mevalonate pathway. Its activity is regulated as follows. Neither the addition of 1 mM Mg(2+) nor 1 mM Mn(2+) has a significant effect on the activity, whereas Zn(2+) causes almost complete inactivation. Strongly inhibited by H(2)O(2), but not by EDTA or iodoacetamide. Its function is as follows. Component of a hydro-lyase that catalyzes the dehydration of mevalonate 5-phosphate (MVA5P) to form trans-anhydromevalonate 5-phosphate (tAHMP). Involved in the archaeal mevalonate (MVA) pathway, which provides fundamental precursors for isoprenoid biosynthesis, such as isopentenyl diphosphate (IPP) and dimethylallyl diphosphate (DMAPP). This Aeropyrum pernix (strain ATCC 700893 / DSM 11879 / JCM 9820 / NBRC 100138 / K1) protein is Phosphomevalonate dehydratase small subunit.